The following is a 476-amino-acid chain: Aspartyl/glutamyl-tRNA(Asn/Gln) amidotransferase subunit B (476 aa).

This sequence belongs to the GatB/GatE family. GatB subfamily. In terms of assembly, heterotrimer of A, B and C subunits.

The catalysed reaction is L-glutamyl-tRNA(Gln) + L-glutamine + ATP + H2O = L-glutaminyl-tRNA(Gln) + L-glutamate + ADP + phosphate + H(+). It catalyses the reaction L-aspartyl-tRNA(Asn) + L-glutamine + ATP + H2O = L-asparaginyl-tRNA(Asn) + L-glutamate + ADP + phosphate + 2 H(+). Functionally, allows the formation of correctly charged Asn-tRNA(Asn) or Gln-tRNA(Gln) through the transamidation of misacylated Asp-tRNA(Asn) or Glu-tRNA(Gln) in organisms which lack either or both of asparaginyl-tRNA or glutaminyl-tRNA synthetases. The reaction takes place in the presence of glutamine and ATP through an activated phospho-Asp-tRNA(Asn) or phospho-Glu-tRNA(Gln). The protein is Aspartyl/glutamyl-tRNA(Asn/Gln) amidotransferase subunit B of Laribacter hongkongensis (strain HLHK9).